A 282-amino-acid chain; its full sequence is MKIVTTVQEMQHITKELRASGKSIGFVPTMGYLHEGHATLLRKAREENEIVVLSVFVNPLQFGPNEDLDRYPRDIDRDENVAKENGVDYLFYPSVEEMYPAEQTTTVEVVKRTDVLCGKQRPGHFAGVATVLMKLFNITLPTRAYFGMKDAQQVAVIEGFVADFNIPVIIVPVDIVREEDGLAKSSRNVYLSQEERKEAPHLYRSLCMAKERIEAGERNAEIITTLVKEYIETYTKGTVDYADLYAYPSLQVVDQIEGRIILAIAVKFENVRLIDNITLTVK.

30–37 is a binding site for ATP; the sequence is MGYLHEGH. Catalysis depends on His-37, which acts as the Proton donor. Residue Gln-61 coordinates (R)-pantoate. Residue Gln-61 participates in beta-alanine binding. 147–150 is a binding site for ATP; that stretch reads GMKD. Gln-153 is a (R)-pantoate binding site. Residues Val-176 and 184–187 contribute to the ATP site; that span reads KSSR.

The protein belongs to the pantothenate synthetase family. In terms of assembly, homodimer.

It is found in the cytoplasm. The catalysed reaction is (R)-pantoate + beta-alanine + ATP = (R)-pantothenate + AMP + diphosphate + H(+). It functions in the pathway cofactor biosynthesis; (R)-pantothenate biosynthesis; (R)-pantothenate from (R)-pantoate and beta-alanine: step 1/1. Functionally, catalyzes the condensation of pantoate with beta-alanine in an ATP-dependent reaction via a pantoyl-adenylate intermediate. This Bacillus thuringiensis subsp. konkukian (strain 97-27) protein is Pantothenate synthetase.